The primary structure comprises 430 residues: Glutamate-1-semialdehyde 2,1-aminomutase (430 aa).

An N6-(pyridoxal phosphate)lysine modification is found at lysine 265.

It belongs to the class-III pyridoxal-phosphate-dependent aminotransferase family. HemL subfamily. In terms of assembly, homodimer. Requires pyridoxal 5'-phosphate as cofactor.

Its subcellular location is the cytoplasm. The enzyme catalyses (S)-4-amino-5-oxopentanoate = 5-aminolevulinate. Its pathway is porphyrin-containing compound metabolism; protoporphyrin-IX biosynthesis; 5-aminolevulinate from L-glutamyl-tRNA(Glu): step 2/2. In Shewanella baltica (strain OS195), this protein is Glutamate-1-semialdehyde 2,1-aminomutase.